The chain runs to 526 residues: Delayed-rectifier potassium channel regulatory subunit KCNS1 (526 aa).

Topologically, residues Met1–Leu217 are cytoplasmic. Residues Pro218 to Ile239 traverse the membrane as a helical segment. The Extracellular portion of the chain corresponds to His240–Pro270. Residues Val271 to Leu293 form a helical membrane-spanning segment. The Cytoplasmic segment spans residues Ala294–Pro304. Residues Leu305–Ala322 traverse the membrane as a helical segment. The Extracellular portion of the chain corresponds to Gly323–Leu337. The helical; Voltage-sensor transmembrane segment at Gly338–His358 threads the bilayer. Topologically, residues Ser359–Tyr373 are cytoplasmic. The helical transmembrane segment at Arg374 to Tyr395 threads the bilayer. Residues Thr396–Ile408 lie on the Extracellular side of the membrane. An intramembrane region (helical) is located at residues Pro409 to Thr420. Positions Thr421–Asp426 match the Selectivity filter motif. An intramembrane segment occupies Thr421–Val428. At Pro429–Lys435 the chain is on the extracellular side. Residues Leu436–Tyr464 traverse the membrane as a helical segment. The Cytoplasmic segment spans residues Arg465–Tyr526. A disordered region spans residues Gly491–Tyr526. Residues Thr499–Asp511 show a composition bias toward basic and acidic residues.

This sequence belongs to the potassium channel family. S (TC 1.A.1.2) subfamily. Kv9.1/KCNS1 sub-subfamily. Heterotetramer with KCNB1. Heterotetramer with KCNB2. Does not form homomultimers.

It localises to the cell membrane. Functionally, potassium channel regulatory subunit that modulate the delayed rectifier voltage-gated potassium channel activity of KCNB1 and KCNB2 by altering their kinetics, expression levels, and shifting the half-inactivation potential to more polarized values. While it does not form functional channels on its own, it can form functional heterotetrameric channels with KCNB1 and KCNB2. Each regulatory subunit has unique regulatory properties that can lead to extensive inhibition, significant changes in kinetics, and/or substantial shifts in the voltage dependencies of the inactivation process. This Pongo abelii (Sumatran orangutan) protein is Delayed-rectifier potassium channel regulatory subunit KCNS1.